Consider the following 216-residue polypeptide: Maleylacetoacetate isomerase (216 aa).

Residue Met-1 is modified to N-acetylmethionine. In terms of domain architecture, GST N-terminal spans Gly-4–Arg-87. Glutathione-binding positions include Ser-14–Arg-19 and Gln-45. Position 57 is an N6-succinyllysine (Lys-57). Residues Val-59, Gln-71–Ser-72, Gln-111, and Asn-115–Ser-117 contribute to the glutathione site. In terms of domain architecture, GST C-terminal spans Asp-92–Ala-212. A Phosphothreonine modification is found at Thr-136. Ser-137 is modified (phosphoserine). Lys-177 bears the N6-succinyllysine mark. A Phosphoserine modification is found at Ser-181.

The protein belongs to the GST superfamily. Zeta family. Homodimer. The cofactor is glutathione. The N-terminus is blocked.

The protein resides in the cytoplasm. The enzyme catalyses 4-maleylacetoacetate = 4-fumarylacetoacetate. It catalyses the reaction RX + glutathione = an S-substituted glutathione + a halide anion + H(+). Its pathway is amino-acid degradation; L-phenylalanine degradation; acetoacetate and fumarate from L-phenylalanine: step 5/6. Functionally, probable bifunctional enzyme showing minimal glutathione-conjugating activity with ethacrynic acid and 7-chloro-4-nitrobenz-2-oxa-1, 3-diazole and maleylacetoacetate isomerase activity. Also has low glutathione peroxidase activity with t-butyl and cumene hydroperoxides. Is able to catalyze the glutathione dependent oxygenation of dichloroacetic acid to glyoxylic acid. In Rattus norvegicus (Rat), this protein is Maleylacetoacetate isomerase (Gstz1).